A 202-amino-acid polypeptide reads, in one-letter code: Small ribosomal subunit protein uS4c (202 aa).

In terms of domain architecture, S4 RNA-binding spans Met-90–Lys-158.

It belongs to the universal ribosomal protein uS4 family. Part of the 30S ribosomal subunit. Contacts protein S5. The interaction surface between S4 and S5 is involved in control of translational fidelity.

It localises to the plastid. It is found in the chloroplast. In terms of biological role, one of the primary rRNA binding proteins, it binds directly to 16S rRNA where it nucleates assembly of the body of the 30S subunit. With S5 and S12 plays an important role in translational accuracy. The polypeptide is Small ribosomal subunit protein uS4c (rps4) (Anthoceros angustus (Hornwort)).